The following is a 739-amino-acid chain: Phosphoribosylformylglycinamidine synthase subunit PurL (739 aa).

Residue histidine 52 is part of the active site. Residues tyrosine 55 and lysine 94 each coordinate ATP. A Mg(2+)-binding site is contributed by glutamate 96. Residues 97–100 (SHNH) and arginine 119 each bind substrate. The active-site Proton acceptor is histidine 98. Aspartate 120 contributes to the Mg(2+) binding site. Glutamine 243 lines the substrate pocket. Aspartate 271 is a binding site for Mg(2+). Position 315-317 (315-317 (ESQ)) interacts with substrate. ATP-binding residues include aspartate 498 and glycine 535. Residue asparagine 536 participates in Mg(2+) binding. A substrate-binding site is contributed by serine 538.

This sequence belongs to the FGAMS family. As to quaternary structure, monomer. Part of the FGAM synthase complex composed of 1 PurL, 1 PurQ and 2 PurS subunits.

The protein localises to the cytoplasm. It catalyses the reaction N(2)-formyl-N(1)-(5-phospho-beta-D-ribosyl)glycinamide + L-glutamine + ATP + H2O = 2-formamido-N(1)-(5-O-phospho-beta-D-ribosyl)acetamidine + L-glutamate + ADP + phosphate + H(+). It participates in purine metabolism; IMP biosynthesis via de novo pathway; 5-amino-1-(5-phospho-D-ribosyl)imidazole from N(2)-formyl-N(1)-(5-phospho-D-ribosyl)glycinamide: step 1/2. Functionally, part of the phosphoribosylformylglycinamidine synthase complex involved in the purines biosynthetic pathway. Catalyzes the ATP-dependent conversion of formylglycinamide ribonucleotide (FGAR) and glutamine to yield formylglycinamidine ribonucleotide (FGAM) and glutamate. The FGAM synthase complex is composed of three subunits. PurQ produces an ammonia molecule by converting glutamine to glutamate. PurL transfers the ammonia molecule to FGAR to form FGAM in an ATP-dependent manner. PurS interacts with PurQ and PurL and is thought to assist in the transfer of the ammonia molecule from PurQ to PurL. This chain is Phosphoribosylformylglycinamidine synthase subunit PurL, found in Caulobacter vibrioides (strain ATCC 19089 / CIP 103742 / CB 15) (Caulobacter crescentus).